Reading from the N-terminus, the 453-residue chain is Methionine aminopeptidase 2-1 (453 aa).

A compositionally biased stretch (basic and acidic residues) spans 1 to 12 (MGSKTPDGHRQS). The disordered stretch occupies residues 1–101 (MGSKTPDGHR…TTPPRVPLST (101 aa)). The segment covering 46–57 (GEDDDDDDENEE) has biased composition (acidic residues). The segment covering 67 to 82 (KKKKRKKSKKKNKKSK) has biased composition (basic residues). His-210 serves as a coordination point for substrate. The a divalent metal cation site is built by Asp-231, Asp-242, and His-306. Residue His-314 coordinates substrate. Residues Glu-339 and Glu-434 each contribute to the a divalent metal cation site.

It belongs to the peptidase M24A family. Methionine aminopeptidase eukaryotic type 2 subfamily. Co(2+) serves as cofactor. The cofactor is Zn(2+). Mn(2+) is required as a cofactor. Requires Fe(2+) as cofactor.

It localises to the cytoplasm. It carries out the reaction Release of N-terminal amino acids, preferentially methionine, from peptides and arylamides.. In terms of biological role, cotranslationally removes the N-terminal methionine from nascent proteins. The N-terminal methionine is often cleaved when the second residue in the primary sequence is small and uncharged (Met-Ala-, Cys, Gly, Pro, Ser, Thr, or Val). The protein is Methionine aminopeptidase 2-1 of Aspergillus terreus (strain NIH 2624 / FGSC A1156).